The chain runs to 546 residues: Crossover junction endonuclease EME1A (546 aa).

Disordered regions lie at residues 1–55 (MSDF…FLDE) and 88–232 (VISL…REKQ). Polar residues predominate over residues 28–49 (PTDLNLDTEPSLQKQPPGSAST). Basic and acidic residues-rich tracts occupy residues 103–120 (SSKK…KPCR) and 149–167 (DAIE…VEKM). Polar residues predominate over residues 173–183 (TITSKSTSLSA). Residues 188–245 (KKKMSKDEKTRAAEEKKLQKEQEKLQKAASKAEDAEHKKLEREKQKWAKEKDKALKCI) adopt a coiled-coil conformation. The segment covering 192-232 (SKDEKTRAAEEKKLQKEQEKLQKAASKAEDAEHKKLEREKQ) has biased composition (basic and acidic residues). Positions 278-478 (NPIQRSIVWT…PSLKSLLKVY (201 aa)) constitute an ERCC4 domain.

Belongs to the EME1/MMS4 family. In terms of assembly, forms a heterodimer with MUS81. It depends on Mg(2+) as a cofactor. Ca(2+) is required as a cofactor.

It is found in the nucleus. In terms of biological role, interacts with MUS81 to form a DNA structure-specific endonuclease with substrate preference for branched DNA structures with a 5'-end at the branch nick. Typical substrates include 3'-flap structures, D-loops, replication forks, nicked Holliday junctions and also intact Holliday junctions with a reduced efficiency. May be required in mitosis for the processing of stalled or collapsed replication fork intermediates. Plays a role in DNA repair and in genotoxic stress-induced homologous recombination (HR) in somatic cells. Mediates a subset of meiotic recombination events that are insensitive to crossover interference. This chain is Crossover junction endonuclease EME1A (EME1A), found in Arabidopsis thaliana (Mouse-ear cress).